A 461-amino-acid polypeptide reads, in one-letter code: Cysteine--tRNA ligase (461 aa).

Cysteine 28 is a binding site for Zn(2+). The short motif at 30 to 40 (ITVYDLCHIGH) is the 'HIGH' region element. The Zn(2+) site is built by cysteine 209, histidine 234, and glutamate 238. A 'KMSKS' region motif is present at residues 266-270 (KMSKS). Lysine 269 is an ATP binding site.

Belongs to the class-I aminoacyl-tRNA synthetase family. In terms of assembly, monomer. Requires Zn(2+) as cofactor.

Its subcellular location is the cytoplasm. It carries out the reaction tRNA(Cys) + L-cysteine + ATP = L-cysteinyl-tRNA(Cys) + AMP + diphosphate. This is Cysteine--tRNA ligase from Escherichia coli O127:H6 (strain E2348/69 / EPEC).